The primary structure comprises 2171 residues: Mediator of DNA damage checkpoint protein 1 (2171 aa).

A compositionally biased stretch (acidic residues) spans 1 to 19 (MEDTQAIDWDVEEEEETEQ). Positions 1–22 (MEDTQAIDWDVEEEEETEQSSE) are disordered. Residues 1–150 (MEDTQAIDWD…SRGPLTVEET (150 aa)) form an interaction with CHEK2 region. The tract at residues 2–220 (EDTQAIDWDV…PFAFNLNSDT (219 aa)) is interaction with the MRN complex. A Phosphothreonine modification is found at threonine 4. In terms of domain architecture, FHA spans 54–105 (NVVGRMPDCSVALPFPSISKQHAEIEILAWDKAPILRDCGSLNGTQILRPPK). The residue at position 108 (serine 108) is a Phosphoserine. The required for nuclear localization (NLS1) stretch occupies residues 145-568 (LTVEETPRVQ…PAKLLVVSLE (424 aa)). Threonine 146 carries the phosphothreonine modification. Phosphoserine occurs at positions 168, 176, 196, and 218. 2 disordered regions span residues 185-248 (RTTS…AKQS) and 261-317 (DQPL…AEVH). Threonine 220 is subject to Phosphothreonine. Basic and acidic residues predominate over residues 261–278 (DQPLVKERDDDTKVKRGA). The residue at position 299 (serine 299) is a Phosphoserine. Threonine 301 bears the Phosphothreonine mark. The segment covering 306–317 (DSRPPGRPAEVH) has biased composition (basic and acidic residues). Serine 329 is subject to Phosphoserine. Threonine 331 is modified (phosphothreonine). The disordered stretch occupies residues 355–387 (GVGTRGPGAPGLAHLQESQAGSDTDVEEGKAPQ). Phosphoserine is present on residues serine 372 and serine 376. Position 378 is a phosphothreonine (threonine 378). Phosphoserine occurs at positions 394, 397, and 402. Phosphothreonine is present on threonine 404. At serine 411 the chain carries Phosphoserine. Disordered stretches follow at residues 443-469 (QRSQTTTERDSDTDVEEEELPVENREA) and 481-522 (VRAH…VDIN). Threonine 449 bears the Phosphothreonine mark. At serine 453 the chain carries Phosphoserine. The residue at position 455 (threonine 455) is a Phosphothreonine. 6 positions are modified to phosphoserine: serine 485, serine 495, serine 498, serine 504, serine 505, and serine 513. Positions 513–522 (SQASTTVDIN) are enriched in polar residues. Position 523 is a phosphothreonine (threonine 523). A Phosphoserine modification is found at serine 590. Lysine 616 is covalently cross-linked (Glycyl lysine isopeptide (Lys-Gly) (interchain with G-Cter in SUMO1); alternate). Lysine 616 participates in a covalent cross-link: Glycyl lysine isopeptide (Lys-Gly) (interchain with G-Cter in SUMO2); alternate. Disordered stretches follow at residues 653–689 (DTLGESTQPQREGAQVPTGREREQHVGGTKDSEDNYG) and 780–1969 (SPPR…TKLN). Residues 671 to 685 (GREREQHVGGTKDSE) are compositionally biased toward basic and acidic residues. Phosphoserine occurs at positions 780 and 793. An N6-acetyllysine modification is found at lysine 812. Composition is skewed to basic and acidic residues over residues 819 to 844 (ETAERVGPERGPLERETEKLLPERQT), 851 to 862 (ELTKGKQDREQK), 868 to 905 (DTQRQESDKNGESASPERDRESLKVEIETSEEIQEKQV), and 914 to 951 (AFEREVERPVANRECDPAELEEKVPKVILERDTQRGEP). Phosphoserine is present on residues serine 955 and serine 998. The segment covering 955–964 (SQDQKGQASS) has biased composition (polar residues). The span at 1016 to 1031 (KASRIRAAEKVSRGDQ) shows a compositional bias: basic and acidic residues. Serine 1033 carries the post-translational modification Phosphoserine. The span at 1040–1051 (PTVPEAPAPPQK) shows a compositional bias: pro residues. Residues serine 1068 and serine 1086 each carry the phosphoserine modification. Residues 1103–1113 (PKPKIRTRKSS) show a composition bias toward basic residues. Composition is skewed to polar residues over residues 1129–1157 (PSTSTAQPVTPKPTSQATRSRTNRSSVKT) and 1170–1187 (PCTSTDQPVTSEPTSQVT). The segment at 1148–1692 (SRTNRSSVKT…TNRSSVKTPE (545 aa)) is interaction with the PRKDC complex. Threonine 1157 bears the Phosphothreonine mark. A Phosphothreonine modification is found at threonine 1198. The span at 1210-1227 (QPSTSTDRPVTSEPTSHA) shows a compositional bias: polar residues. Serine 1235 carries the post-translational modification Phosphoserine. Threonine 1239 carries the phosphothreonine modification. Residues 1251–1268 (QPSTSTDQPVTSEPTYQA) are compositionally biased toward polar residues. Phosphothreonine is present on residues threonine 1280 and threonine 1302. Residues 1306–1318 (TSRTTRSRTNMSS) are compositionally biased toward low complexity. Composition is skewed to polar residues over residues 1334 to 1350 (PSTSTEQPVTPEPTSRA) and 1375 to 1403 (PSTSTDQPVTPEPTSQATRGRTNRSSVKT). Low complexity predominate over residues 1429-1441 (TSRTTRSRTNMSS). A compositionally biased stretch (polar residues) spans 1457–1473 (PSTSTEQPVTPEPTSRA). A phosphoserine mark is found at serine 1481 and serine 1482. At lysine 1484 the chain carries N6-acetyllysine. The residue at position 1485 (threonine 1485) is a Phosphothreonine. Lysine 1495 is covalently cross-linked (Glycyl lysine isopeptide (Lys-Gly) (interchain with G-Cter in SUMO1); alternate). A Glycyl lysine isopeptide (Lys-Gly) (interchain with G-Cter in SUMO2); alternate cross-link involves residue lysine 1495. Polar residues-rich tracts occupy residues 1498–1526 (PSTSTDQPVTPEPTSQATRGRTNRSSVKT), 1538–1557 (QPSTSTDQPVTPEPTSQVTR), and 1580–1596 (ASASTDQPVTSEPTSRT). Phosphothreonine is present on residues threonine 1507 and threonine 1548. Phosphothreonine is present on residues threonine 1615 and threonine 1630. Polar residues-rich tracts occupy residues 1620–1649 (QPSTSTDQPVTPEPTSQATRGRTNRSSVKT) and 1661–1678 (QPSTSRNQLVTPEPTSRA). Position 1646 is a phosphoserine (serine 1646). Phosphothreonine occurs at positions 1649 and 1671. Serine 1686 is subject to Phosphoserine. Threonine 1690 bears the Phosphothreonine mark. The span at 1693–1702 (PVVPTAPEPH) shows a compositional bias: pro residues. A compositionally biased stretch (polar residues) spans 1706–1718 (STDQPVTPKLTSR). Phosphothreonine is present on residues threonine 1712, threonine 1746, and threonine 1753. Residues 1760-1771 (GGQSKTLRSSTV) show a composition bias toward polar residues. The residue at position 1763 (serine 1763) is a Phosphoserine. Position 1779 is a phosphothreonine (threonine 1779). A compositionally biased stretch (polar residues) spans 1780 to 1801 (PEFQSPVTTDQPISPEPITQPS). The tract at residues 1780–2171 (PEFQSPVTTD…VLSPLEMSST (392 aa)) is required for nuclear localization (NLS2). 2 positions are modified to phosphoserine: serine 1784 and serine 1793. Lysine 1822 is covalently cross-linked (Glycyl lysine isopeptide (Lys-Gly) (interchain with G-Cter in SUMO2)). Serine 1857 bears the Phosphoserine mark. A Glycyl lysine isopeptide (Lys-Gly) (interchain with G-Cter in SUMO2) cross-link involves residue lysine 1872. Threonine 1882 carries the phosphothreonine modification. Serine 1902 is modified (phosphoserine). Residues 1905 to 1918 (HQKQPQRGEVSQKT) show a composition bias toward polar residues. A Glycyl lysine isopeptide (Lys-Gly) (interchain with G-Cter in SUMO1); alternate cross-link involves residue lysine 1922. Residue lysine 1922 forms a Glycyl lysine isopeptide (Lys-Gly) (interchain with G-Cter in SUMO2); alternate linkage. Positions 1929–1939 (AEKPGKEEDVV) are enriched in basic and acidic residues. At threonine 1940 the chain carries Phosphothreonine. 2 consecutive BRCT domains span residues 1974 to 2052 (APKV…EYVV) and 2073 to 2164 (RERR…FVLS). Arginine 2025 carries the post-translational modification Omega-N-methylarginine.

In terms of assembly, homodimer. Interacts with H2AX, which requires phosphorylation of H2AX on 'Ser-139'. Interacts with the MRN complex, composed of MRE11, RAD50, and NBN. Interacts with CHEK2, which requires ATM-mediated phosphorylation of 'Thr-68' within the FHA domain of CHEK2. Interacts constitutively with the BRCA1-BARD1 complex, SMC1A and TP53BP1. Interacts with ATM and FANCD2, and these interactions are reduced upon DNA damage. Also interacts with the PRKDC complex, composed of XRCC6/KU70, XRCC5/KU80 and PRKDC/XRCC7. This interaction may be required for PRKDC autophosphorylation, which is essential for DNA double strand break (DSB) repair. When phosphorylated by ATM, interacts with RNF8 (via FHA domain). Interacts with CEP164. When phosphorylated, interacts with APTX (via FHA-like domain). Interacts (when phosphorylated) with TOPBP1; promoting TOPBP1 localization to DNA damage sites during mitosis. Interacts (when phosphorylated) with NBN; promoting NBN and MRN complex localization to DNA damage sites. In terms of processing, phosphorylated upon exposure to ionizing radiation (IR), ultraviolet radiation (UV), and hydroxyurea (HU). Phosphorylation in response to IR requires ATM, NBN, and possibly CHEK2. Also phosphorylated during the G2/M phase of the cell cycle and during activation of the mitotic spindle checkpoint. Phosphorylation at Thr-4 by ATM stabilizes and enhances homodimerization via the FHA domain. Phosphorylated at Ser-168 and Ser-196 by CK2 in response to DNA damage during mitosis, promoting interaction with TOPBP1. Phosphorylated by CK2 in response to DNA damage, promoting interaction with NBN and recruitment of the MRN complex to DNA damage sites. Sumoylation at Lys-1922 by PIAS4 following DNA damage promotes ubiquitin-mediated degradation. Post-translationally, ubiquitinated by RNF4, leading to proteasomal degradation; undergoes 'Lys-48'-linked polyubiquitination.

Its subcellular location is the nucleus. The protein resides in the chromosome. Histone reader protein required for checkpoint-mediated cell cycle arrest in response to DNA damage within both the S phase and G2/M phases of the cell cycle. Specifically recognizes and binds histone H2AX phosphorylated at 'Ser-139', a marker of DNA damage, serving as a scaffold for the recruitment of DNA repair and signal transduction proteins to discrete foci of DNA damage sites. Also required for downstream events subsequent to the recruitment of these proteins. These include phosphorylation and activation of the ATM, CHEK1 and CHEK2 kinases, and stabilization of TP53/p53 and apoptosis. ATM and CHEK2 may also be activated independently by a parallel pathway mediated by TP53BP1. Required for chromosomal stability during mitosis by promoting recruitment of TOPBP1 to DNA double strand breaks (DSBs): TOPBP1 forms filamentous assemblies that bridge MDC1 and tether broken chromosomes during mitosis. Required for the repair of DSBs via homologous recombination by promoting recruitment of NBN component of the MRN complex to DSBs. The polypeptide is Mediator of DNA damage checkpoint protein 1 (MDC1) (Pan troglodytes (Chimpanzee)).